Here is a 281-residue protein sequence, read N- to C-terminus: Tryptophan 2,3-dioxygenase (281 aa).

Residues 50–54 (FIIQH), Y112, and R116 contribute to the substrate site. H239 contributes to the heme binding site. T253 provides a ligand contact to substrate.

This sequence belongs to the tryptophan 2,3-dioxygenase family. As to quaternary structure, homotetramer. Requires heme as cofactor.

The enzyme catalyses L-tryptophan + O2 = N-formyl-L-kynurenine. It functions in the pathway amino-acid degradation; L-tryptophan degradation via kynurenine pathway; L-kynurenine from L-tryptophan: step 1/2. In terms of biological role, heme-dependent dioxygenase that catalyzes the oxidative cleavage of the L-tryptophan (L-Trp) pyrrole ring and converts L-tryptophan to N-formyl-L-kynurenine. Catalyzes the oxidative cleavage of the indole moiety. The polypeptide is Tryptophan 2,3-dioxygenase (Saccharopolyspora erythraea (strain ATCC 11635 / DSM 40517 / JCM 4748 / NBRC 13426 / NCIMB 8594 / NRRL 2338)).